A 333-amino-acid polypeptide reads, in one-letter code: Ribosomal RNA small subunit methyltransferase H (333 aa).

Residues 43–45 (GGH), aspartate 62, tyrosine 89, aspartate 110, and glutamine 117 each bind S-adenosyl-L-methionine. The disordered stretch occupies residues 312-333 (RLRAARRIRTTPTRPSPRRRRP).

The protein belongs to the methyltransferase superfamily. RsmH family.

The protein resides in the cytoplasm. It catalyses the reaction cytidine(1402) in 16S rRNA + S-adenosyl-L-methionine = N(4)-methylcytidine(1402) in 16S rRNA + S-adenosyl-L-homocysteine + H(+). In terms of biological role, specifically methylates the N4 position of cytidine in position 1402 (C1402) of 16S rRNA. The chain is Ribosomal RNA small subunit methyltransferase H from Beutenbergia cavernae (strain ATCC BAA-8 / DSM 12333 / CCUG 43141 / JCM 11478 / NBRC 16432 / NCIMB 13614 / HKI 0122).